The sequence spans 384 residues: 5-amino-6-(D-ribitylamino)uracil--L-tyrosine 4-hydroxyphenyl transferase 2 (384 aa).

Residues 53–286 enclose the Radical SAM core domain; the sequence is VSYVVNRNIY…IAISRVILHT (234 aa). [4Fe-4S] cluster-binding residues include Cys67, Cys71, and Cys74.

This sequence belongs to the radical SAM superfamily. CofH family. In terms of assembly, consists of two subunits, CofG and CofH. Requires [4Fe-4S] cluster as cofactor.

It catalyses the reaction 5-amino-6-(D-ribitylamino)uracil + L-tyrosine + S-adenosyl-L-methionine = 5-amino-5-(4-hydroxybenzyl)-6-(D-ribitylimino)-5,6-dihydrouracil + 2-iminoacetate + 5'-deoxyadenosine + L-methionine + H(+). Its pathway is cofactor biosynthesis; coenzyme F0 biosynthesis. Functionally, catalyzes the radical-mediated synthesis of 5-amino-5-(4-hydroxybenzyl)-6-(D-ribitylimino)-5,6-dihydrouracil from 5-amino-6-(D-ribitylamino)uracil and L-tyrosine. The protein is 5-amino-6-(D-ribitylamino)uracil--L-tyrosine 4-hydroxyphenyl transferase 2 of Methanosarcina mazei (strain ATCC BAA-159 / DSM 3647 / Goe1 / Go1 / JCM 11833 / OCM 88) (Methanosarcina frisia).